The chain runs to 147 residues: MPSSAFKINLSVSPWFFCSTWSSLICWPWTITTSVSRSTLSSTTWILWTWLFNSVSIFVSRWSFDFLYSLNSLRVTYSVFTGITGLLSLNCLLKLPENSTLLLSLSIIYQPEKVPFWSFSPCHEILFRYKTEFSLSLSHTSFLFSEI.

This sequence to M.pneumoniae MPN_465.

This is an uncharacterized protein from Mycoplasma pneumoniae (strain ATCC 29342 / M129 / Subtype 1) (Mycoplasmoides pneumoniae).